A 473-amino-acid polypeptide reads, in one-letter code: Sulfate adenylyltransferase subunit 1 (473 aa).

In terms of domain architecture, tr-type G spans 19–238 (KTLLKFLTCG…IKIKNSISSE (220 aa)). Residues 28 to 35 (GSVDDGKS) are G1. 28–35 (GSVDDGKS) serves as a coordination point for GTP. Positions 86 to 90 (GITID) are G2. The G3 stretch occupies residues 107-110 (DTPG). Residues 107–111 (DTPGH) and 162–165 (NKMD) contribute to the GTP site. Residues 162 to 165 (NKMD) form a G4 region. A G5 region spans residues 200 to 202 (SAL).

It belongs to the TRAFAC class translation factor GTPase superfamily. Classic translation factor GTPase family. CysN/NodQ subfamily. Heterodimer composed of CysD, the smaller subunit, and CysN.

It carries out the reaction sulfate + ATP + H(+) = adenosine 5'-phosphosulfate + diphosphate. It participates in sulfur metabolism; hydrogen sulfide biosynthesis; sulfite from sulfate: step 1/3. Its function is as follows. With CysD forms the ATP sulfurylase (ATPS) that catalyzes the adenylation of sulfate producing adenosine 5'-phosphosulfate (APS) and diphosphate, the first enzymatic step in sulfur assimilation pathway. APS synthesis involves the formation of a high-energy phosphoric-sulfuric acid anhydride bond driven by GTP hydrolysis by CysN coupled to ATP hydrolysis by CysD. The protein is Sulfate adenylyltransferase subunit 1 of Buchnera aphidicola subsp. Acyrthosiphon pisum (strain 5A).